We begin with the raw amino-acid sequence, 100 residues long: Urease subunit gamma (100 aa).

Belongs to the urease gamma subunit family. In terms of assembly, heterotrimer of UreA (gamma), UreB (beta) and UreC (alpha) subunits. Three heterotrimers associate to form the active enzyme.

The protein localises to the cytoplasm. It catalyses the reaction urea + 2 H2O + H(+) = hydrogencarbonate + 2 NH4(+). It functions in the pathway nitrogen metabolism; urea degradation; CO(2) and NH(3) from urea (urease route): step 1/1. The polypeptide is Urease subunit gamma (Mesorhizobium japonicum (strain LMG 29417 / CECT 9101 / MAFF 303099) (Mesorhizobium loti (strain MAFF 303099))).